The following is a 413-amino-acid chain: Ferredoxin--NADP reductase (413 aa).

Methionine 1 is modified (N-acetylmethionine). Residues 18 to 76 (NRLFVYEVIGLSQSTMTDGLDYPIRRSGSTFITVPLKRMNQEMRRITRMGGKIVSIKPL) form the CpcD-like domain. Residues 74–120 (KPLEGDSPLPHTEGIAKPSQSEGSGSEAVANPAPESNKTMTTTPKEK) are disordered. Residues 107 to 116 (PESNKTMTTT) show a composition bias toward polar residues. Residues 133–256 (KTPYIGKVLE…TGPVGKEMLL (124 aa)) enclose the FAD-binding FR-type domain. Residues 192-195 (RLYS), 213-215 (CVR), tyrosine 219, 230-232 (VCS), and threonine 271 contribute to the FAD site. Positions 195 and 215 each coordinate NADP(+). Residues threonine 271, 303-304 (IP), 333-334 (SR), 343-347 (RMYIQ), 372-373 (GL), and glutamate 411 contribute to the NADP(+) site.

The protein belongs to the ferredoxin--NADP reductase type 1 family. Purifies with both the classic phycobilisome (PBS) supercomplex (CpcG-PBS) and a photosystem I-associated PBS called CpcL-PBS; it accumulates to a higher level in CpcL-PBS. In both PBS it can be cross-linked to both phycocyanin subunits. Requires FAD as cofactor. Acetylated at the N-terminus; 6% of protein in CpcG-PBS and 12% of protein in CpcL-PBS is acetylated.

The protein resides in the cellular thylakoid membrane. It catalyses the reaction 2 reduced [2Fe-2S]-[ferredoxin] + NADP(+) + H(+) = 2 oxidized [2Fe-2S]-[ferredoxin] + NADPH. This is Ferredoxin--NADP reductase from Synechocystis sp. (strain ATCC 27184 / PCC 6803 / Kazusa).